The chain runs to 103 residues: Histone H4 (103 aa).

The segment covering Met1–Gly14 has biased composition (gly residues). Residues Met1–Arg20 form a disordered region. At Ser2 the chain carries N-acetylserine. Residue Lys17 is modified to N6-acetyllysine. The DNA-binding element occupies Lys17–Arg21. Lys80 is modified (N6-methylated lysine).

This sequence belongs to the histone H4 family. As to quaternary structure, the nucleosome is a histone octamer containing two molecules each of H2A, H2B, H3 and H4 assembled in one H3-H4 heterotetramer and two H2A-H2B heterodimers. The octamer wraps approximately 147 bp of DNA.

The protein resides in the nucleus. It is found in the chromosome. Its function is as follows. Core component of nucleosome. Nucleosomes wrap and compact DNA into chromatin, limiting DNA accessibility to the cellular machineries which require DNA as a template. Histones thereby play a central role in transcription regulation, DNA repair, DNA replication and chromosomal stability. DNA accessibility is regulated via a complex set of post-translational modifications of histones, also called histone code, and nucleosome remodeling. This Olisthodiscus luteus (Marine phytoflagellate) protein is Histone H4.